Here is an 81-residue protein sequence, read N- to C-terminus: ATP synthase subunit c (81 aa).

2 helical membrane passes run 5–25 (IAAG…IGAG) and 57–77 (VGLV…FVFA).

Belongs to the ATPase C chain family. As to quaternary structure, F-type ATPases have 2 components, F(1) - the catalytic core - and F(0) - the membrane proton channel. F(1) has five subunits: alpha(3), beta(3), gamma(1), delta(1), epsilon(1). F(0) has three main subunits: a(1), b(2) and c(10-14). The alpha and beta chains form an alternating ring which encloses part of the gamma chain. F(1) is attached to F(0) by a central stalk formed by the gamma and epsilon chains, while a peripheral stalk is formed by the delta and b chains.

The protein localises to the cell membrane. Its function is as follows. F(1)F(0) ATP synthase produces ATP from ADP in the presence of a proton or sodium gradient. F-type ATPases consist of two structural domains, F(1) containing the extramembraneous catalytic core and F(0) containing the membrane proton channel, linked together by a central stalk and a peripheral stalk. During catalysis, ATP synthesis in the catalytic domain of F(1) is coupled via a rotary mechanism of the central stalk subunits to proton translocation. Functionally, key component of the F(0) channel; it plays a direct role in translocation across the membrane. A homomeric c-ring of between 10-14 subunits forms the central stalk rotor element with the F(1) delta and epsilon subunits. This Mycolicibacterium gilvum (strain PYR-GCK) (Mycobacterium gilvum (strain PYR-GCK)) protein is ATP synthase subunit c.